A 383-amino-acid chain; its full sequence is MSLKQHTQTIFRQQFDRESDITIKAPGRVNLIGEHTDYNDGFVLPCAINYETVISCGKRDDRQIRVIAADYENQQDIFSLDAPIVPHPEYRWADYVRGVVKHLQMRNADFGGADLVICGNVPQGAGLSSSASLEVAVGQALQSLYQLPLSGVELALNGQEAENQFVGCNCGIMDQLISALGKKDHALLIDCRTLETRAVPMPENMAVVIINSNIQRGLVDSEYNTRRQQCEAAARFFGVKALRDVEPSLFFSIQDELDPVVAKRARHVISENARTLAAADALAAGNLKLMGQLMQESHISMRDDFEITVPPIDRLVEIVKSVIGDQGGVRMTGGGFGGCIIALMPLELVEQVRTTVAQEYPAHSGGKKETFYVCQASQGAGLC.

34–37 (EHTD) contributes to the substrate binding site. Residue 124-130 (GAGLSSS) coordinates ATP. 2 residues coordinate Mg(2+): S130 and E162. The Proton acceptor role is filled by D174. Residue Y223 coordinates substrate.

It belongs to the GHMP kinase family. GalK subfamily.

The protein localises to the cytoplasm. It catalyses the reaction alpha-D-galactose + ATP = alpha-D-galactose 1-phosphate + ADP + H(+). It functions in the pathway carbohydrate metabolism; galactose metabolism. Functionally, catalyzes the transfer of the gamma-phosphate of ATP to D-galactose to form alpha-D-galactose-1-phosphate (Gal-1-P). The polypeptide is Galactokinase (Yersinia pseudotuberculosis serotype O:1b (strain IP 31758)).